Reading from the N-terminus, the 203-residue chain is Protein GrpE (203 aa).

Over residues 1 to 20 (MSSKEQNVHEEQVSKEKEGM) the composition is skewed to basic and acidic residues. Positions 1 to 38 (MSSKEQNVHEEQVSKEKEGMESVMNESQEQVKSEDAQA) are disordered.

The protein belongs to the GrpE family. As to quaternary structure, homodimer.

It localises to the cytoplasm. Participates actively in the response to hyperosmotic and heat shock by preventing the aggregation of stress-denatured proteins, in association with DnaK and GrpE. It is the nucleotide exchange factor for DnaK and may function as a thermosensor. Unfolded proteins bind initially to DnaJ; upon interaction with the DnaJ-bound protein, DnaK hydrolyzes its bound ATP, resulting in the formation of a stable complex. GrpE releases ADP from DnaK; ATP binding to DnaK triggers the release of the substrate protein, thus completing the reaction cycle. Several rounds of ATP-dependent interactions between DnaJ, DnaK and GrpE are required for fully efficient folding. This chain is Protein GrpE, found in Proteus mirabilis (strain HI4320).